Here is a 312-residue protein sequence, read N- to C-terminus: Large ribosomal subunit protein uL10 (312 aa).

Positions 287–312 are disordered; it reads AAAAPAAKKEEPKEESDDDMGFGLFD.

The protein belongs to the universal ribosomal protein uL10 family. As to quaternary structure, P0 forms a pentameric complex by interaction with dimers of P1 and P2. Phosphorylated.

Ribosomal protein P0 is the functional equivalent of E.coli protein L10. The polypeptide is Large ribosomal subunit protein uL10 (Caenorhabditis elegans).